Here is a 201-residue protein sequence, read N- to C-terminus: tRNA (guanine-N(7)-)-methyltransferase (201 aa).

Residues Glu-34, Glu-59, Asp-86, and Asp-107 each contribute to the S-adenosyl-L-methionine site. Residue Asp-107 is part of the active site. Substrate-binding positions include Lys-111, Asp-143, and Thr-181–Glu-184.

It belongs to the class I-like SAM-binding methyltransferase superfamily. TrmB family.

It catalyses the reaction guanosine(46) in tRNA + S-adenosyl-L-methionine = N(7)-methylguanosine(46) in tRNA + S-adenosyl-L-homocysteine. The protein operates within tRNA modification; N(7)-methylguanine-tRNA biosynthesis. Its function is as follows. Catalyzes the formation of N(7)-methylguanine at position 46 (m7G46) in tRNA. This is tRNA (guanine-N(7)-)-methyltransferase from Mycoplasma mobile (strain ATCC 43663 / 163K / NCTC 11711) (Mesomycoplasma mobile).